Here is a 325-residue protein sequence, read N- to C-terminus: Succinylglutamate desuccinylase (325 aa).

His51, Glu54, and His148 together coordinate Zn(2+). Glu211 is a catalytic residue.

The protein belongs to the AspA/AstE family. Succinylglutamate desuccinylase subfamily. Zn(2+) serves as cofactor.

The catalysed reaction is N-succinyl-L-glutamate + H2O = L-glutamate + succinate. The protein operates within amino-acid degradation; L-arginine degradation via AST pathway; L-glutamate and succinate from L-arginine: step 5/5. Functionally, transforms N(2)-succinylglutamate into succinate and glutamate. This is Succinylglutamate desuccinylase from Photorhabdus laumondii subsp. laumondii (strain DSM 15139 / CIP 105565 / TT01) (Photorhabdus luminescens subsp. laumondii).